We begin with the raw amino-acid sequence, 209 residues long: MGIMTSLRQGDVHRVTAETDVLVRVGLDGCGQCNVSTGVAFLDHMLHQLSSHGLLDLEITATGDTHIDDHHTNEDVGIAVGQALSQALGDRRGIHRFGHFVAPLDEALVQVVLDCSGRPHLSYGLQIPAERIGSYDSELVKEFFVAVVNNSGLTLHIRQLAGTNSHHIVEACFKAFARALRMAIEIDPRRAGAVPSSKGVLEQAGGQKS.

The protein belongs to the imidazoleglycerol-phosphate dehydratase family.

It is found in the cytoplasm. The catalysed reaction is D-erythro-1-(imidazol-4-yl)glycerol 3-phosphate = 3-(imidazol-4-yl)-2-oxopropyl phosphate + H2O. The protein operates within amino-acid biosynthesis; L-histidine biosynthesis; L-histidine from 5-phospho-alpha-D-ribose 1-diphosphate: step 6/9. This chain is Imidazoleglycerol-phosphate dehydratase, found in Prochlorococcus marinus (strain MIT 9313).